Reading from the N-terminus, the 333-residue chain is Gramillins biosynthetic cluster protein FGSG_00039 (333 aa).

Its pathway is mycotoxin biosynthesis. Part of the gene cluster that mediates the biosynthesis of gramillins A and B, bicyclic lipopeptides that induce cell death in maize leaves but not in wheat leaves. The nonribosomal peptide synthetase GRA1 incorporates respectively a glutamic adic (Glu), a leucine (Leu), a serine (Ser), a hydroxyglutamine (HOGln), a 2-amino decanoic acid, and 2 cysteins (CysB and CysA). The biosynthesis of 2-amino decanoic acid incorporated in gramillins could be initiated by a fatty acid synthase composed of the alpha and beta subunits FGSG_00036 and FGSG_11656. The cytochrome P450 monooxygenase FGSG_15680 could hydroxylate the fatty acid chain. Subsequent oxidation to the ketone by the oxidoreductase FGSG_00048 and transamination by aminotransferase FGSG_00049 could form 2-amino-decanoic acid. On the other hand, FGSG_15680 could also be responsible for the HO-modified glutamine at the gamma-position. Whether hydroxylation occurs on the fully assembled product or on the Gln residue prior to assembly into the gramillins requires further proof. The thioredoxin FGSG_00043 could also be required for the disulfide-bond formation between CysA and CysB. The specific involvement of the remaining proteins from the cluster is more difficult to discern, but could have broader regulatory (FGSG_00040 and FGSG_11657) or enzymatic functions (FGSG_00044 and FGSG_00045). The final C-domain of GRA1 does not possess the expected sequence of a termination CT domain, often implicated in macrocyclization and release of a cyclopeptidein fungal NRPs; and the thioesterase FGSG_00047 may act in concert with the terminal C-domain of GRA1 to catalyze the formation of the macrocyclic anhydride and release of the products. The chain is Gramillins biosynthetic cluster protein FGSG_00039 from Gibberella zeae (strain ATCC MYA-4620 / CBS 123657 / FGSC 9075 / NRRL 31084 / PH-1) (Wheat head blight fungus).